Reading from the N-terminus, the 280-residue chain is 2-C-methyl-D-erythritol 4-phosphate cytidylyltransferase (280 aa).

The protein belongs to the IspD/TarI cytidylyltransferase family. IspD subfamily.

The enzyme catalyses 2-C-methyl-D-erythritol 4-phosphate + CTP + H(+) = 4-CDP-2-C-methyl-D-erythritol + diphosphate. Its pathway is isoprenoid biosynthesis; isopentenyl diphosphate biosynthesis via DXP pathway; isopentenyl diphosphate from 1-deoxy-D-xylulose 5-phosphate: step 2/6. Functionally, catalyzes the formation of 4-diphosphocytidyl-2-C-methyl-D-erythritol from CTP and 2-C-methyl-D-erythritol 4-phosphate (MEP). This is 2-C-methyl-D-erythritol 4-phosphate cytidylyltransferase from Psychrobacter cryohalolentis (strain ATCC BAA-1226 / DSM 17306 / VKM B-2378 / K5).